We begin with the raw amino-acid sequence, 411 residues long: ATP-dependent Clp protease ATP-binding subunit ClpX (411 aa).

Residues 1-51 (MAKKKDEEYCSFCGMPRTQVNLMLEGVHAHICDECALRAGEVVREALQKFK) enclose the ClpX-type ZB domain. 4 residues coordinate Zn(2+): cysteine 10, cysteine 13, cysteine 32, and cysteine 35. 119 to 126 (PTGTGKTL) provides a ligand contact to ATP.

Belongs to the ClpX chaperone family. In terms of assembly, component of the ClpX-ClpP complex. Forms a hexameric ring that, in the presence of ATP, binds to fourteen ClpP subunits assembled into a disk-like structure with a central cavity, resembling the structure of eukaryotic proteasomes.

Functionally, ATP-dependent specificity component of the Clp protease. It directs the protease to specific substrates. Can perform chaperone functions in the absence of ClpP. This Porphyromonas gingivalis (strain ATCC 33277 / DSM 20709 / CIP 103683 / JCM 12257 / NCTC 11834 / 2561) protein is ATP-dependent Clp protease ATP-binding subunit ClpX.